The primary structure comprises 89 residues: Small ribosomal subunit protein uS14 (89 aa).

Belongs to the universal ribosomal protein uS14 family. Part of the 30S ribosomal subunit. Contacts proteins S3 and S10.

Binds 16S rRNA, required for the assembly of 30S particles and may also be responsible for determining the conformation of the 16S rRNA at the A site. The chain is Small ribosomal subunit protein uS14 from Latilactobacillus sakei subsp. sakei (strain 23K) (Lactobacillus sakei subsp. sakei).